Consider the following 456-residue polypeptide: Arginine biosynthesis bifunctional protein ArgJ, mitochondrial (456 aa).

Residues T184, K213, T224, E311, N451, and T456 each contribute to the substrate site. Residue T224 is the Nucleophile of the active site.

Belongs to the ArgJ family. In terms of assembly, heterodimer of an alpha and a beta chain. The alpha and beta chains are autoproteolytically processed from a single precursor protein within the mitochondrion.

It localises to the mitochondrion matrix. The enzyme catalyses N(2)-acetyl-L-ornithine + L-glutamate = N-acetyl-L-glutamate + L-ornithine. The catalysed reaction is L-glutamate + acetyl-CoA = N-acetyl-L-glutamate + CoA + H(+). Its pathway is amino-acid biosynthesis; L-arginine biosynthesis; L-ornithine and N-acetyl-L-glutamate from L-glutamate and N(2)-acetyl-L-ornithine (cyclic): step 1/1. The protein operates within amino-acid biosynthesis; L-arginine biosynthesis; N(2)-acetyl-L-ornithine from L-glutamate: step 1/4. Its function is as follows. Catalyzes two activities which are involved in the cyclic version of arginine biosynthesis: the synthesis of acetylglutamate from glutamate and acetyl-CoA, and of ornithine by transacetylation between acetylornithine and glutamate. This is Arginine biosynthesis bifunctional protein ArgJ, mitochondrial from Neosartorya fischeri (strain ATCC 1020 / DSM 3700 / CBS 544.65 / FGSC A1164 / JCM 1740 / NRRL 181 / WB 181) (Aspergillus fischerianus).